Consider the following 369-residue polypeptide: Cyclin-I2 (369 aa).

The interval 1-116 is disordered; sequence MASGAQLPPQ…SRKPRNLEGD (116 aa). Low complexity-rich tracts occupy residues 64–76 and 83–101; these read AASL…AVPV and APAG…EQAP.

The protein belongs to the cyclin family.

This chain is Cyclin-I2 (CCNI2), found in Homo sapiens (Human).